The following is a 353-amino-acid chain: Thiamine-phosphate synthase (353 aa).

Residues Met1 to Gly128 form a unknown region. The interval Leu129–Ala353 is thiamine-phosphate synthase. 4-amino-2-methyl-5-(diphosphooxymethyl)pyrimidine is bound by residues Gln185–Lys189 and Asn217. Residues Asp218 and Asp237 each coordinate Mg(2+). Position 256 (Ser256) interacts with 4-amino-2-methyl-5-(diphosphooxymethyl)pyrimidine. A 2-[(2R,5Z)-2-carboxy-4-methylthiazol-5(2H)-ylidene]ethyl phosphate-binding site is contributed by Thr282–Thr284. Residue Lys285 coordinates 4-amino-2-methyl-5-(diphosphooxymethyl)pyrimidine. Gly312 is a 2-[(2R,5Z)-2-carboxy-4-methylthiazol-5(2H)-ylidene]ethyl phosphate binding site.

Belongs to the thiamine-phosphate synthase family. It depends on Mg(2+) as a cofactor.

It catalyses the reaction 2-[(2R,5Z)-2-carboxy-4-methylthiazol-5(2H)-ylidene]ethyl phosphate + 4-amino-2-methyl-5-(diphosphooxymethyl)pyrimidine + 2 H(+) = thiamine phosphate + CO2 + diphosphate. It carries out the reaction 2-(2-carboxy-4-methylthiazol-5-yl)ethyl phosphate + 4-amino-2-methyl-5-(diphosphooxymethyl)pyrimidine + 2 H(+) = thiamine phosphate + CO2 + diphosphate. The catalysed reaction is 4-methyl-5-(2-phosphooxyethyl)-thiazole + 4-amino-2-methyl-5-(diphosphooxymethyl)pyrimidine + H(+) = thiamine phosphate + diphosphate. It participates in cofactor biosynthesis; thiamine diphosphate biosynthesis; thiamine phosphate from 4-amino-2-methyl-5-diphosphomethylpyrimidine and 4-methyl-5-(2-phosphoethyl)-thiazole: step 1/1. Its function is as follows. Condenses 4-methyl-5-(beta-hydroxyethyl)thiazole monophosphate (THZ-P) and 2-methyl-4-amino-5-hydroxymethyl pyrimidine pyrophosphate (HMP-PP) to form thiamine monophosphate (TMP). The sequence is that of Thiamine-phosphate synthase from Synechococcus sp. (strain CC9311).